The following is a 495-amino-acid chain: Lysine--tRNA ligase (495 aa).

Mg(2+) contacts are provided by Glu-406 and Glu-413.

The protein belongs to the class-II aminoacyl-tRNA synthetase family. In terms of assembly, homodimer. Requires Mg(2+) as cofactor.

Its subcellular location is the cytoplasm. It carries out the reaction tRNA(Lys) + L-lysine + ATP = L-lysyl-tRNA(Lys) + AMP + diphosphate. In Staphylococcus epidermidis (strain ATCC 35984 / DSM 28319 / BCRC 17069 / CCUG 31568 / BM 3577 / RP62A), this protein is Lysine--tRNA ligase.